Consider the following 114-residue polypeptide: Beta-microseminoprotein (114 aa).

An N-terminal signal peptide occupies residues 1 to 20 (MNVLLGGFVIFATFVTLCNA). Cystine bridges form between cysteine 22/cysteine 70, cysteine 38/cysteine 62, cysteine 57/cysteine 93, cysteine 60/cysteine 69, and cysteine 84/cysteine 107.

Belongs to the beta-microseminoprotein family. Homodimer; Interacts with PI16.

The protein resides in the secreted. The chain is Beta-microseminoprotein (MSMB) from Papio anubis (Olive baboon).